The sequence spans 675 residues: MRVLSARFRVLLACLALVIPVSETNFLSKERASQVLVRKRRANTLFEETMKGNLERECIEELCNKEEAREVFENNPETDYFYPKYLGCLGAFRVGSFHAARQSANAYPDLRSCVKAISDQCDPIPCNEDGYLACQDGQAAFTCFCKPGWQGDRCQYDVNECKDPSNVNGGCSQICDNTPGSYHCSCKRGFAMLPNKKDCKDLDECALKPSVCGTAVCKNIPGDFECECPDGYRYDPSSKSCKDVDECSENMCAQLCVNFPGGYSCYCDGKKGFKLAQDQKSCEGIPVCLSLDLDKNYELLYLAEQFAGVVLYLKFRLPDITRFSAEFDFRTYDSEGIILYAESLDHSNWLLIALRDGKIEVQFKNEFSTQITTGGNVINNGIWNMVSVEELDDSVSIKIAKEAVMNINKLGSLFKPTDGFLDTKIYFAGLPRKVESALIKPINPRLDGCIRGWNLMKQGALGAKEIIEGKQNKHCFLNVEKGSYYPGSGIAQFSIDYNNVTNAEGWQMNVTLNIRPSTGTGVMLALVSGGTVPFALSLVDSRSGTSQDIVVFVENSVVARLEAVSLCSDQQSQLKCNVNRNGLELWTPLRKDVIYSKDLQRQLAVLDKAMKRTVATYLGGIPDISFSATPVNAFYSGCMEVNINGVQLDLDEAISKHKDIRAHSCPSVRKIQKNF.

A signal peptide spans 1-24 (MRVLSARFRVLLACLALVIPVSET). The propeptide occupies 25 to 41 (NFLSKERASQVLVRKRR). A Gla domain is found at 42–87 (ANTLFEETMKGNLERECIEELCNKEEAREVFENNPETDYFYPKYLG). 4-carboxyglutamate is present on residues E47, E48, E55, E57, E60, E61, E66, E67, E70, E73, and E77. A disulfide bridge links C58 with C63. The tract at residues 88–116 (CLGAFRVGSFHAARQSANAYPDLRSCVKA) is thrombin-sensitive. One can recognise an EGF-like 1 domain in the interval 117 to 155 (ISDQCDPIPCNEDGYLACQDGQAAFTCFCKPGWQGDRCQ). 13 disulfide bridges follow: C121/C134, C126/C143, C145/C154, C161/C175, C171/C184, C186/C199, C205/C217, C212/C226, C228/C241, C247/C256, C252/C265, C267/C282, and C449/C475. Residue D136 is modified to (3R)-3-hydroxyaspartate. One can recognise an EGF-like 2; calcium-binding domain in the interval 157 to 200 (DVNECKDPSNVNGGCSQICDNTPGSYHCSCKRGFAMLPNKKDCK). An EGF-like 3; calcium-binding domain is found at 201–242 (DLDECALKPSVCGTAVCKNIPGDFECECPDGYRYDPSSKSCK). The region spanning 243–283 (DVDECSENMCAQLCVNFPGGYSCYCDGKKGFKLAQDQKSCE) is the EGF-like 4; calcium-binding domain. 2 consecutive Laminin G-like domains span residues 299 to 475 (LLYL…NKHC) and 484 to 665 (YYPG…AHSC). 2 N-linked (GlcNAc...) asparagine glycosylation sites follow: N499 and N509. C638 and C665 are disulfide-bonded.

The iron and 2-oxoglutarate dependent 3-hydroxylation of aspartate and asparagine is (R) stereospecific within EGF domains. In terms of tissue distribution, plasma.

It localises to the secreted. Its function is as follows. Anticoagulant plasma protein; it is a cofactor to activated protein C in the degradation of coagulation factors Va and VIIIa. It helps to prevent coagulation and stimulating fibrinolysis. The polypeptide is Vitamin K-dependent protein S (Pros1) (Mus musculus (Mouse)).